An 86-amino-acid polypeptide reads, in one-letter code: Large ribosomal subunit protein bL27 (86 aa).

The span at 1-10 shows a compositional bias: gly residues; the sequence is MAQKKGGGST. The segment at 1 to 21 is disordered; sequence MAQKKGGGSTRNGRDSESKRL.

Belongs to the bacterial ribosomal protein bL27 family.

This is Large ribosomal subunit protein bL27 from Cupriavidus pinatubonensis (strain JMP 134 / LMG 1197) (Cupriavidus necator (strain JMP 134)).